The primary structure comprises 89 residues: Small ribosomal subunit protein uS14A (89 aa).

Belongs to the universal ribosomal protein uS14 family. Part of the 30S ribosomal subunit. Contacts proteins S3 and S10.

Functionally, binds 16S rRNA, required for the assembly of 30S particles and may also be responsible for determining the conformation of the 16S rRNA at the A site. This is Small ribosomal subunit protein uS14A from Oceanobacillus iheyensis (strain DSM 14371 / CIP 107618 / JCM 11309 / KCTC 3954 / HTE831).